Consider the following 360-residue polypeptide: C-C chemokine receptor type 4 (360 aa).

Topologically, residues 1 to 39 are extracellular; sequence MNATEVTDTTQDETVYNSYYFYESMPKPCTKEGIKAFGE. Residue Asn2 is glycosylated (N-linked (GlcNAc...) asparagine). The helical transmembrane segment at 40 to 67 threads the bilayer; that stretch reads VFLPPLYSLVFLLGLFGNSVVVLVLFKY. Topologically, residues 68–77 are cytoplasmic; the sequence is KRLKSMTDVY. Residues 78–98 form a helical membrane-spanning segment; sequence LLNLAISDLLFVLSLPFWGYY. At 99 to 111 the chain is on the extracellular side; the sequence is AADQWVFGLGLCK. Residues Cys110 and Cys187 are joined by a disulfide bond. The helical transmembrane segment at 112-133 threads the bilayer; that stretch reads IVSWMYLVGFYSGIFFIMLMSI. Topologically, residues 134-150 are cytoplasmic; it reads DRYLAIVHAVFSLKART. Residues 151–175 form a helical membrane-spanning segment; the sequence is LTYGVITSLITWSVAVFASLPGLLF. Over 176-206 the chain is Extracellular; the sequence is STCYTEHNHTYCKTQYSVNSTTWKVLSSLEI. N-linked (GlcNAc...) asparagine glycans are attached at residues Asn183 and Asn194. The chain crosses the membrane as a helical span at residues 207–226; it reads NVLGLLIPLGIMLFCYSMII. At 227-242 the chain is on the cytoplasmic side; it reads RTLQHCKNEKKNRAVR. Residues 243–267 form a helical membrane-spanning segment; the sequence is MIFAVVVLFLGFWTPYNVVLFLETL. The Extracellular segment spans residues 268–284; the sequence is VELEVLQDCTLERYLDY. Residues 285–308 traverse the membrane as a helical segment; that stretch reads AIQATETLAFIHCCLNPVIYFFLG. Over 309-360 the chain is Cytoplasmic; that stretch reads EKFRKYITQLFRTCRGPLVLCKHCDFLQVYSADMSSSSYTQSTVDHDFRDAL.

The protein belongs to the G-protein coupled receptor 1 family. Post-translationally, in natural killer cells, CCL22 binding induces phosphorylation on yet undefined Ser/Thr residues, most probably by beta-adrenergic receptor kinases 1 and 2. As to expression, expressed in the thymus, macrophages and T- and B-cells.

It localises to the cell membrane. In terms of biological role, high affinity receptor for the C-C type chemokines CCL17/TARC and CCL22/MDC. The activity of this receptor is mediated by G(i) proteins which activate a phosphatidylinositol-calcium second messenger system. Could play a role in lipopolysaccharide (LPS)-induced endotoxic shock. In the CNS, could mediate hippocampal-neuron survival. The protein is C-C chemokine receptor type 4 (Ccr4) of Mus musculus (Mouse).